We begin with the raw amino-acid sequence, 293 residues long: Coatomer subunit epsilon-2 (293 aa).

Belongs to the COPE family. As to quaternary structure, oligomeric complex that consists of at least the alpha, beta, beta', gamma, delta, epsilon and zeta subunits.

It localises to the cytoplasm. Its subcellular location is the golgi apparatus membrane. It is found in the cytoplasmic vesicle. The protein localises to the COPI-coated vesicle membrane. The coatomer is a cytosolic protein complex that binds to dilysine motifs and reversibly associates with Golgi non-clathrin-coated vesicles, which further mediate biosynthetic protein transport from the ER, via the Golgi up to the trans Golgi network. The coatomer complex is required for budding from Golgi membranes, and is essential for the retrograde Golgi-to-ER transport of dilysine-tagged proteins. In Arabidopsis thaliana (Mouse-ear cress), this protein is Coatomer subunit epsilon-2.